The primary structure comprises 490 residues: Probable cytosol aminopeptidase (490 aa).

Mn(2+) contacts are provided by K257 and D262. Residue K269 is part of the active site. The Mn(2+) site is built by D281, D341, and E343. R345 is an active-site residue.

This sequence belongs to the peptidase M17 family. Requires Mn(2+) as cofactor.

Its subcellular location is the cytoplasm. The catalysed reaction is Release of an N-terminal amino acid, Xaa-|-Yaa-, in which Xaa is preferably Leu, but may be other amino acids including Pro although not Arg or Lys, and Yaa may be Pro. Amino acid amides and methyl esters are also readily hydrolyzed, but rates on arylamides are exceedingly low.. The enzyme catalyses Release of an N-terminal amino acid, preferentially leucine, but not glutamic or aspartic acids.. In terms of biological role, presumably involved in the processing and regular turnover of intracellular proteins. Catalyzes the removal of unsubstituted N-terminal amino acids from various peptides. This chain is Probable cytosol aminopeptidase, found in Prochlorococcus marinus (strain MIT 9215).